Reading from the N-terminus, the 45-residue chain is Large ribosomal subunit protein bL34 (45 aa).

The protein belongs to the bacterial ribosomal protein bL34 family.

This is Large ribosomal subunit protein bL34 from Arthrobacter sp. (strain FB24).